The following is a 266-amino-acid chain: Beta-lactamase OXA-11 (266 aa).

The N-terminal stretch at 1–20 (MKTFAAYVIIACLSSTALAG) is a signal peptide. Catalysis depends on S67, which acts as the Acyl-ester intermediate. At K70 the chain carries N6-carboxylysine. Substrate is bound at residue 205–207 (KTG).

This sequence belongs to the class-D beta-lactamase family.

The catalysed reaction is a beta-lactam + H2O = a substituted beta-amino acid. Hydrolyzes carbenicillin, oxacillin and cephalosporin. Does not hydrolyze cefoxitin or carbapenems. This Pseudomonas aeruginosa protein is Beta-lactamase OXA-11 (bla).